Reading from the N-terminus, the 573-residue chain is Solute carrier family 41 member 2 (573 aa).

Residues 1 to 162 are Extracellular-facing; that stretch reads MTNSKGRSIT…KESSGIMALQ (162 aa). 2 positions are modified to phosphoserine: Ser136 and Ser137. The helical transmembrane segment at 163-183 threads the bilayer; sequence ILVPFLLAGFGTVSAGMVLDI. The Cytoplasmic portion of the chain corresponds to 184 to 195; that stretch reads VQHWEVFRKVTE. Residues 196-216 traverse the membrane as a helical segment; that stretch reads VFILVPALLGLKGNLEMTLAS. Topologically, residues 217–245 are extracellular; the sequence is RLSTAVNIGKMDSPIEKWNLIIGNLALKQ. The chain crosses the membrane as a helical span at residues 246-266; it reads VQATVVGFLAAVAAIILGWIP. Residues 267–282 lie on the Cytoplasmic side of the membrane; the sequence is EGKYYLDHSILLCSSS. A helical transmembrane segment spans residues 283–303; the sequence is VATAFIASLLQGIIMVGVIVG. Residues 304–313 lie on the Extracellular side of the membrane; it reads SKKTGINPDN. A helical transmembrane segment spans residues 314-334; sequence VATPIAASFGDLITLAILAWI. At 335–347 the chain is on the cytoplasmic side; it reads SQGLYSCLETYYY. The helical transmembrane segment at 348–368 threads the bilayer; that stretch reads ISPLVGVFFLALTPIWIIIAA. Over 369 to 376 the chain is Extracellular; sequence KHPATRTV. The chain crosses the membrane as a helical span at residues 377–397; the sequence is LHSGWEPVITAMVISSIGGLI. Over 398–406 the chain is Cytoplasmic; the sequence is LDTTVSDPN. The helical transmembrane segment at 407 to 427 threads the bilayer; the sequence is LVGIVVYTPVINGIGGNLVAI. The Extracellular segment spans residues 428-469; it reads QASRISTYLHLHSIPGELPDEPKGCYYPFRTFFGPGVNNKSA. The helical transmembrane segment at 470–490 threads the bilayer; the sequence is QVLLLLVIPGHLIFLYTIHLM. Residues 491–498 are Cytoplasmic-facing; the sequence is KSGHTSLT. A helical transmembrane segment spans residues 499–519; it reads IIFIVVYLFGAVLQVFTLLWI. Topologically, residues 520 to 543 are extracellular; the sequence is ADWMVHHFWRKGKDPDSFSIPYLT. The helical transmembrane segment at 544–564 threads the bilayer; that stretch reads ALGDLLGTALLALSFHFLWLI. At 565 to 573 the chain is on the cytoplasmic side; it reads GDRDGDVGD.

Belongs to the SLC41A transporter family.

The protein resides in the cell membrane. The catalysed reaction is Mg(2+)(in) = Mg(2+)(out). It catalyses the reaction Mn(2+)(in) = Mn(2+)(out). The enzyme catalyses Co(2+)(in) = Co(2+)(out). It carries out the reaction Ni(2+)(in) = Ni(2+)(out). The catalysed reaction is Fe(2+)(in) = Fe(2+)(out). Acts as a plasma-membrane magnesium transporter. Can also mediate the transport of other divalent metal cations in an order of Ba(2+) &gt; Ni(2+) &gt; Co(2+) &gt; Fe(2+) &gt; Mn(2+). This is Solute carrier family 41 member 2 (SLC41A2) from Homo sapiens (Human).